The sequence spans 475 residues: Probable GABA permease (475 aa).

12 helical membrane-spanning segments follow: residues 27-47 (VTMLSIAGVIGAGLFVGSGHA), 48-68 (IAAAGPAALLAYLIAGTLVVL), 105-125 (LYWWFWVLVIPLEAIAAAAIL), 127-147 (AWFPAIDTWIFALAVTFLLTV), 163-183 (FALLKVIAIIAFIVLGAVAIV), 211-231 (AVLGALLTTMFSFMGTEIVTI), 250-270 (VIWRIGLFYLVSIFIVISIVP), 296-316 (LIVDLVVLVAVASCLNSAIYT), 345-365 (PAVLASTAVGFLTTIVNYFAP), 368-388 (VFTFLLASSGAVALLVYLVIA), 413-433 (PWLTWAVILFIVAALSIMLIM), and 438-458 (HEVFATALLTIFTVCLGLLNA).

This sequence belongs to the amino acid-polyamine-organocation (APC) superfamily. Amino acid transporter (AAT) (TC 2.A.3.1) family.

The protein resides in the membrane. Involved in the degradation of beta-alanine. In Pseudomonas aeruginosa (strain ATCC 15692 / DSM 22644 / CIP 104116 / JCM 14847 / LMG 12228 / 1C / PRS 101 / PAO1), this protein is Probable GABA permease (bauD).